The following is a 411-amino-acid chain: Lysosome-associated membrane glycoprotein 3 (411 aa).

The signal sequence occupies residues 1–21 (MPGQISAVAVLFLSLTVILHG). The Lumenal portion of the chain corresponds to 22–376 (YQIREKEFPK…NVNECLSDYT (355 aa)). The span at 172-192 (HKSTTNQRPTLSTNVLGTSTP) shows a compositional bias: polar residues. A disordered region spans residues 172–204 (HKSTTNQRPTLSTNVLGTSTPTHKDRSTTSPVP). Asn-227 is a glycosylation site (N-linked (GlcNAc...) asparagine). 2 cysteine pairs are disulfide-bonded: Cys-232/Cys-269 and Cys-334/Cys-371. A helical membrane pass occupies residues 377 to 397 (VVLPMVAIIVVVICVVGLSVY). Topologically, residues 398–411 (KIRQRHQSSAYQRI) are cytoplasmic.

The protein belongs to the LAMP family. Monomer. Interacts with FURIN.

It is found in the cell surface. It localises to the lysosome membrane. The protein resides in the cytoplasmic vesicle membrane. Its subcellular location is the early endosome membrane. Its function is as follows. Lysosomal membrane glycoprotein which plays a role in the unfolded protein response (UPR) that contributes to protein degradation and cell survival during proteasomal dysfunction. Plays a role in the process of fusion of the lysosome with the autophagosome, thereby modulating the autophagic process. Promotes hepatocellular lipogenesis through activation of the PI3K/Akt pathway. May also play a role in dendritic cell function and in adaptive immunity. This is Lysosome-associated membrane glycoprotein 3 (Lamp3) from Mus musculus (Mouse).